Reading from the N-terminus, the 244-residue chain is Protein crossbronx (244 aa).

Positions 20–176 (QQEYKILAEY…VQKNIKESKE (157 aa)) constitute a UBC core domain. A disordered region spans residues 209–244 (AGRSKQTEPSAQQANGGHATGLSWVKEGEFKPLSIE).

The protein belongs to the ubiquitin-conjugating enzyme family. FTS subfamily.

The protein is Protein crossbronx (cbx) of Drosophila erecta (Fruit fly).